The primary structure comprises 351 residues: Ferredoxin--NADP reductase (351 aa).

Residues Asp44, Gln52, Tyr57, Ile97, Phe132, Asp296, and Ser337 each contribute to the FAD site.

This sequence belongs to the ferredoxin--NADP reductase type 2 family. In terms of assembly, homodimer. Requires FAD as cofactor.

It carries out the reaction 2 reduced [2Fe-2S]-[ferredoxin] + NADP(+) + H(+) = 2 oxidized [2Fe-2S]-[ferredoxin] + NADPH. This chain is Ferredoxin--NADP reductase, found in Burkholderia vietnamiensis (strain G4 / LMG 22486) (Burkholderia cepacia (strain R1808)).